The chain runs to 346 residues: Protein-glutamate methylesterase/protein-glutamine glutaminase (346 aa).

A Response regulatory domain is found at 6–123; sequence KVLVVDDSAF…SLDLEKVRDL (118 aa). A 4-aspartylphosphate modification is found at Asp57. Residues 155–346 enclose the CheB-type methylesterase domain; sequence PFDKTIIVIG…ADSIVRQCKR (192 aa). Active-site residues include Ser166, His193, and Asp289.

It belongs to the CheB family. Phosphorylated by CheA. Phosphorylation of the N-terminal regulatory domain activates the methylesterase activity.

The protein localises to the cytoplasm. The catalysed reaction is [protein]-L-glutamate 5-O-methyl ester + H2O = L-glutamyl-[protein] + methanol + H(+). It catalyses the reaction L-glutaminyl-[protein] + H2O = L-glutamyl-[protein] + NH4(+). In terms of biological role, involved in chemotaxis. Part of a chemotaxis signal transduction system that modulates chemotaxis in response to various stimuli. Catalyzes the demethylation of specific methylglutamate residues introduced into the chemoreceptors (methyl-accepting chemotaxis proteins or MCP) by CheR. Also mediates the irreversible deamidation of specific glutamine residues to glutamic acid. The protein is Protein-glutamate methylesterase/protein-glutamine glutaminase of Halalkalibacterium halodurans (strain ATCC BAA-125 / DSM 18197 / FERM 7344 / JCM 9153 / C-125) (Bacillus halodurans).